We begin with the raw amino-acid sequence, 426 residues long: Tyrosine--tRNA ligase (426 aa).

Tyr37 is an L-tyrosine binding site. The short motif at 42–51 is the 'HIGH' region element; the sequence is PTADSLHLGH. L-tyrosine contacts are provided by Tyr175 and Gln179. The 'KMSKS' region signature appears at 235-239; the sequence is KFGKT. Position 238 (Lys238) interacts with ATP. Residues 357–415 form the S4 RNA-binding domain; sequence TDLMQALVESELQPSRGQARKAIAANGVTVNGIKQPDPDYVLNENDRYFSNYTLLRRGK.

Belongs to the class-I aminoacyl-tRNA synthetase family. TyrS type 1 subfamily. Homodimer.

The protein localises to the cytoplasm. The catalysed reaction is tRNA(Tyr) + L-tyrosine + ATP = L-tyrosyl-tRNA(Tyr) + AMP + diphosphate + H(+). Catalyzes the attachment of tyrosine to tRNA(Tyr) in a two-step reaction: tyrosine is first activated by ATP to form Tyr-AMP and then transferred to the acceptor end of tRNA(Tyr). This chain is Tyrosine--tRNA ligase, found in Klebsiella pneumoniae (strain 342).